A 238-amino-acid polypeptide reads, in one-letter code: 2,3,4,5-tetrahydropyridine-2,6-dicarboxylate N-acetyltransferase (238 aa).

Belongs to the transferase hexapeptide repeat family. DapH subfamily.

It carries out the reaction (S)-2,3,4,5-tetrahydrodipicolinate + acetyl-CoA + H2O = L-2-acetamido-6-oxoheptanedioate + CoA. Its pathway is amino-acid biosynthesis; L-lysine biosynthesis via DAP pathway; LL-2,6-diaminopimelate from (S)-tetrahydrodipicolinate (acetylase route): step 1/3. Its function is as follows. Catalyzes the transfer of an acetyl group from acetyl-CoA to tetrahydrodipicolinate. This chain is 2,3,4,5-tetrahydropyridine-2,6-dicarboxylate N-acetyltransferase, found in Pseudothermotoga lettingae (strain ATCC BAA-301 / DSM 14385 / NBRC 107922 / TMO) (Thermotoga lettingae).